Reading from the N-terminus, the 587-residue chain is Inorganic phosphate transporter PHO84 (587 aa).

The Extracellular portion of the chain corresponds to 1–67; that stretch reads MSSVNKDTIH…FGWQQVKTIS (67 aa). Lys-6 participates in a covalent cross-link: Glycyl lysine isopeptide (Lys-Gly) (interchain with G-Cter in ubiquitin). Residues 68 to 88 form a helical membrane-spanning segment; it reads IAGVGFLTDSYDIFAINLGIT. Over 89 to 108 the chain is Cytoplasmic; the sequence is MMSYVYWHGSMPGPSQTLLK. Residues 109–129 traverse the membrane as a helical segment; the sequence is VSTSVGTVIGQFGFGTLADIV. At 130 to 133 the chain is on the extracellular side; the sequence is GRKR. A helical transmembrane segment spans residues 134-154; sequence IYGMELIIMIVCTILQTTVAH. Over 155 to 156 the chain is Cytoplasmic; sequence SP. The helical transmembrane segment at 157 to 177 threads the bilayer; that stretch reads AINFVAVLTFYRIVMGIGIGG. The Extracellular portion of the chain corresponds to 178 to 201; that stretch reads DYPLSSIITSEFATTKWRGAIMGA. Residues 202–222 form a helical membrane-spanning segment; sequence VFANQAWGQISGGIIALILVA. Residues 223 to 250 lie on the Cytoplasmic side of the membrane; it reads AYKGELEYANSGAECDARCQKACDQMWR. The chain crosses the membrane as a helical span at residues 251–271; the sequence is ILIGLGTVLGLACLYFRLTIP. Residues 272–345 are Extracellular-facing; sequence ESPRYQLDVN…RHFGQWKYGK (74 aa). Lys-298 participates in a covalent cross-link: Glycyl lysine isopeptide (Lys-Gly) (interchain with G-Cter in ubiquitin). Thr-302 bears the Phosphothreonine mark. 2 positions are modified to phosphoserine: Ser-303 and Ser-316. Thr-317 carries the post-translational modification Phosphothreonine. The residue at position 321 (Ser-321) is a Phosphoserine. A helical membrane pass occupies residues 346–366; the sequence is ILLGTAGSWFTLDVAFYGLSL. Residues 367-395 lie on the Cytoplasmic side of the membrane; sequence NSAVILQTIGYAGSKNVYKKLYDTAVGNL. The chain crosses the membrane as a helical span at residues 396 to 416; it reads ILICAGSLPGYWVSVFTVDII. Residues 417–419 lie on the Extracellular side of the membrane; it reads GRK. The helical transmembrane segment at 420–440 threads the bilayer; it reads PIQLAGFIILTALFCVIGFAY. Topologically, residues 441-442 are cytoplasmic; sequence HK. A helical membrane pass occupies residues 443–463; that stretch reads LGDHGLLALYVICQFFQNFGP. The Extracellular portion of the chain corresponds to 464–485; that stretch reads NTTTFIVPGECFPTRYRSTAHG. Residues 486–506 traverse the membrane as a helical segment; it reads ISAASGKVGAIIAQTALGTLI. Over 507–522 the chain is Cytoplasmic; that stretch reads DHNCARDGKPTNCWLP. A helical transmembrane segment spans residues 523–543; the sequence is HVMEIFALFMLLGIFTTLLIP. Residues 544–587 are Extracellular-facing; that stretch reads ETKRKTLEEINELYHDEIDPATLNFRNKNNDIESSSPSQLQHEA. The tract at residues 568–587 is disordered; sequence FRNKNNDIESSSPSQLQHEA. Ser-577, Ser-579, and Ser-581 each carry phosphoserine.

This sequence belongs to the major facilitator superfamily. Phosphate:H(+) symporter (TC 2.A.1.9) family. As to quaternary structure, may function as a monomer. Post-translationally, phosphorylated; phosphorylation increases after phosphate addition to the growth medium. In terms of processing, ubiquitinated in a phosphate-dependent manner; ubiquitination may influence the trafficking of PHO84 to the cell membrane and serve as a signal for endocytosis and internalization.

It is found in the cell membrane. The protein localises to the vacuole. It catalyses the reaction phosphate(in) + H(+)(in) = phosphate(out) + H(+)(out). It carries out the reaction Mn(2+)(in) = Mn(2+)(out). The enzyme catalyses Zn(2+)(in) = Zn(2+)(out). The catalysed reaction is Cu(2+)(in) = Cu(2+)(out). It catalyses the reaction Co(2+)(in) = Co(2+)(out). With respect to regulation, transport activity is inhibited in the presence of the protonophore carbonylcyanide m-chlorophenylhydrazone. Transport activity is inhibited by glycerol-3-phosphate. Transport activity is inhibited by phosphonoacetic acid. Signaling activity is stimulated by glycerol-3-phosphate which acts as a nontransported PHO84 agonist that can trigger PKA signaling. Signaling activity is stimulated by arsenate. Its function is as follows. Proton-coupled high-affinity transporter for external inorganic phosphate. Acts as a transceptor, a membrane protein that in addition to its transporter activity also possesses receptor-like signaling activity; mediates activation of the protein kinase A (PKA) pathway targets during growth induction, triggered by phosphate addition to cells growth-arrested due to previous phosphate starvation. Is not an essential protein, since constitutive, low affinity phosphate transporters exist in yeast. Can function as a low affinity metal transporter that transports manganese, zinc, cobalt and copper. Plays a role in manganese homeostasis predominantly under manganese surplus conditions. In Saccharomyces cerevisiae (strain ATCC 204508 / S288c) (Baker's yeast), this protein is Inorganic phosphate transporter PHO84 (PHO84).